Here is a 761-residue protein sequence, read N- to C-terminus: Mitochondrial intermediate peptidase 1 (761 aa).

His-530 serves as a coordination point for Zn(2+). The active site involves Glu-531. 2 residues coordinate Zn(2+): His-534 and His-537.

Belongs to the peptidase M3 family. Zn(2+) is required as a cofactor.

It localises to the mitochondrion matrix. It catalyses the reaction Release of an N-terminal octapeptide as second stage of processing of some proteins imported into the mitochondrion.. In terms of biological role, cleaves proteins, imported into the mitochondrion, to their mature size. While most mitochondrial precursor proteins are processed to the mature form in one step by mitochondrial processing peptidase (MPP), the sequential cleavage by MIP of an octapeptide after initial processing by MPP is a required step for a subgroup of nuclear-encoded precursor proteins destined for the matrix or the inner membrane. This Cryptococcus neoformans var. neoformans serotype D (strain B-3501A) (Filobasidiella neoformans) protein is Mitochondrial intermediate peptidase 1 (OCT1).